Reading from the N-terminus, the 129-residue chain is C-type natriuretic peptide 1 (129 aa).

The first 24 residues, methionine 1–glycine 24, serve as a signal peptide directing secretion. Residues lysine 25 to lysine 107 constitute a propeptide that is removed on maturation. Cysteine 113 and cysteine 129 are disulfide-bonded.

Belongs to the natriuretic peptide family.

Its subcellular location is the secreted. Its function is as follows. Hormone which plays a role in endochondral ossification through regulation of cartilaginous growth plate chondrocytes proliferation and differentiation. May also be vasoactive and natriuretic. May be important for freshwater adaptation. This is C-type natriuretic peptide 1 from Aquarana catesbeiana (American bullfrog).